The following is a 706-amino-acid chain: Kinesin-like protein KIF2A (706 aa).

Residues 1 to 217 (MATANFGKIQ…LDYRPLTTAD (217 aa)) form a globular region. The interval 66 to 139 (LVPDEEIEPS…AQQNGSVSDI (74 aa)) is disordered. Ser-75 is modified (phosphoserine). Thr-78 and Thr-97 each carry phosphothreonine. Ser-100 is subject to Phosphoserine. Lys-102 carries the post-translational modification N6-acetyllysine. Residues 123 to 139 (FPEQSSSAQQNGSVSDI) show a composition bias toward polar residues. Residues Ser-135 and Ser-140 each carry the phosphoserine modification. The interval 165–186 (KLQEKREKRRLQQQELREKRAQ) is disordered. Positions 223-553 (RICVCVRKRP…LRYANRVKEL (331 aa)) constitute a Kinesin motor domain. Position 313 to 320 (313 to 320 (GQTGSGKT)) interacts with ATP. Phosphoserine is present on residues Asp-556 and Gln-573. Residues 660-699 (ATQLEAILEQKIDILTELRDKVKSFRAALQEEEQASKQIN) adopt a coiled-coil conformation.

The protein belongs to the TRAFAC class myosin-kinesin ATPase superfamily. Kinesin family. MCAK/KIF2 subfamily. Interacts with AURKA and PLK1. Interacts with PSRC1. Interacts with MCRS1; the interaction enhances recruitment of KIF2A to the minus ends of spindle microtubules which promotes chromosome alignment.

The protein resides in the cytoplasm. It localises to the cytoskeleton. Its subcellular location is the microtubule organizing center. It is found in the centrosome. The protein localises to the spindle pole. The protein resides in the spindle. Plus end-directed microtubule-dependent motor required for normal brain development. May regulate microtubule dynamics during axonal growth. Required for normal progression through mitosis. Required for normal congress of chromosomes at the metaphase plate. Required for normal spindle dynamics during mitosis. Promotes spindle turnover. Implicated in formation of bipolar mitotic spindles. Has microtubule depolymerization activity. The protein is Kinesin-like protein KIF2A (KIF2A) of Homo sapiens (Human).